The following is a 458-amino-acid chain: Chromosomal replication initiator protein DnaA (458 aa).

A domain I, interacts with DnaA modulators region spans residues 1 to 79 (MSLAIWQECL…ENPNHSVKIR (79 aa)). The domain II stretch occupies residues 79–120 (RLMVGNVSSVEKKPAKQIPTQAPLTNQPWEGESKAHRVPHKS). A disordered region spans residues 92 to 114 (PAKQIPTQAPLTNQPWEGESKAH). The span at 96-106 (IPTQAPLTNQP) shows a compositional bias: polar residues. The tract at residues 121 to 338 (NLIKKYTFDN…GAIANISAKA (218 aa)) is domain III, AAA+ region. Gly165, Gly167, Lys168, and Thr169 together coordinate ATP. The tract at residues 339–458 (QFTGQGITIS…YKILIRTLSM (120 aa)) is domain IV, binds dsDNA.

Belongs to the DnaA family. Oligomerizes as a right-handed, spiral filament on DNA at oriC.

It localises to the cytoplasm. Its function is as follows. Plays an essential role in the initiation and regulation of chromosomal replication. ATP-DnaA binds to the origin of replication (oriC) to initiate formation of the DNA replication initiation complex once per cell cycle. Binds the DnaA box (a 9 base pair repeat at the origin) and separates the double-stranded (ds)DNA. Forms a right-handed helical filament on oriC DNA; dsDNA binds to the exterior of the filament while single-stranded (ss)DNA is stabiized in the filament's interior. The ATP-DnaA-oriC complex binds and stabilizes one strand of the AT-rich DNA unwinding element (DUE), permitting loading of DNA polymerase. After initiation quickly degrades to an ADP-DnaA complex that is not apt for DNA replication. Binds acidic phospholipids. The chain is Chromosomal replication initiator protein DnaA from Psychromonas ingrahamii (strain DSM 17664 / CCUG 51855 / 37).